The following is a 304-amino-acid chain: Coenzyme PQQ synthesis protein B (304 aa).

It belongs to the PqqB family.

The protein operates within cofactor biosynthesis; pyrroloquinoline quinone biosynthesis. May be involved in the transport of PQQ or its precursor to the periplasm. This chain is Coenzyme PQQ synthesis protein B, found in Ectopseudomonas mendocina (strain ymp) (Pseudomonas mendocina).